The sequence spans 163 residues: Inorganic pyrophosphatase (163 aa).

Positions 21, 35, and 47 each coordinate substrate. The Mg(2+) site is built by D57, D62, and D94. Y131 provides a ligand contact to substrate.

The protein belongs to the PPase family. In terms of assembly, homohexamer. Mg(2+) serves as cofactor.

Its subcellular location is the cytoplasm. The catalysed reaction is diphosphate + H2O = 2 phosphate + H(+). In terms of biological role, catalyzes the hydrolysis of inorganic pyrophosphate (PPi) forming two phosphate ions. The chain is Inorganic pyrophosphatase from Halalkalibacterium halodurans (strain ATCC BAA-125 / DSM 18197 / FERM 7344 / JCM 9153 / C-125) (Bacillus halodurans).